A 520-amino-acid chain; its full sequence is F-box/LRR-repeat protein At3g59200 (520 aa).

Residues 6–54 (RDRISSLPNPVVSHILSFLPTKEAASTSVLSKKWRYLFAYVTNLDFDDS) enclose the F-box domain. LRR repeat units follow at residues 170 to 197 (CVDV…VLMN), 219 to 244 (FCEE…EYSD), and 340 to 365 (NSEI…VLKR).

The protein is F-box/LRR-repeat protein At3g59200 of Arabidopsis thaliana (Mouse-ear cress).